Consider the following 50-residue polypeptide: U23-theraphotoxin-Cg1a 2 (50 aa).

Cystine bridges form between Cys22/Cys36, Cys29/Cys41, and Cys35/Cys47.

Belongs to the neurotoxin 10 (Hwtx-1) family. 64 (Jztx-20) subfamily. As to expression, expressed by the venom gland.

It localises to the secreted. Probable ion channel inhibitor. The protein is U23-theraphotoxin-Cg1a 2 of Chilobrachys guangxiensis (Chinese earth tiger tarantula).